The primary structure comprises 87 residues: DNA-directed RNA polymerase subunit omega (87 aa).

Belongs to the RNA polymerase subunit omega family. In terms of assembly, the RNAP catalytic core consists of 2 alpha, 1 beta, 1 beta' and 1 omega subunit. When a sigma factor is associated with the core the holoenzyme is formed, which can initiate transcription.

The enzyme catalyses RNA(n) + a ribonucleoside 5'-triphosphate = RNA(n+1) + diphosphate. In terms of biological role, promotes RNA polymerase assembly. Latches the N- and C-terminal regions of the beta' subunit thereby facilitating its interaction with the beta and alpha subunits. The protein is DNA-directed RNA polymerase subunit omega of Pseudomonas fluorescens (strain ATCC BAA-477 / NRRL B-23932 / Pf-5).